Reading from the N-terminus, the 746-residue chain is Zinc finger protein 366 (746 aa).

Residues 1–64 (MQKAMKMVKD…FRYEPSPGDL (64 aa)) are disordered. 11 C2H2-type zinc fingers span residues 250–272 (WQCP…ILGH), 278–300 (HACS…MLTH), 306–328 (HKCQ…MMQH), 334–356 (HNCR…EAKH), 362–384 (NICV…LTTH), 390–412 (YNCS…MMKH), 418–440 (YICS…SLTH), 446–468 (HKCG…VLIH), 474–496 (YQCH…MIVH), 502–524 (FKCK…LHLH), and 530–553 (FKCL…KVKH). Residues 452–746 (GREFTLLANM…MEKQAVLLGI (295 aa)) are interaction with NRIP1. The PXDLS signature appears at 587–591 (PFDLS). The interval 587 to 689 (PFDLSQKRSA…DHEGSDIDCE (103 aa)) is disordered. The span at 613 to 627 (CQEEEEEAGEEDNCY) shows a compositional bias: acidic residues. Residues 675–689 (EDRSEDHEGSDIDCE) show a composition bias toward basic and acidic residues.

Interacts with ESR1 and NRIP1. Interacts (via PXDLS motif) with CTBP1. Expressed in immature and mature dendritic cells (DCs).

It is found in the nucleus. Has transcriptional repression activity. Acts as a corepressor of ESR1; the function seems to involve CTBP1 and histone deacetylases. In Mus musculus (Mouse), this protein is Zinc finger protein 366.